Here is a 195-residue protein sequence, read N- to C-terminus: Guanylate kinase (195 aa).

The region spanning 7 to 186 (GVLLVLSSPS…SVEEISSILD (180 aa)) is the Guanylate kinase-like domain. 14-21 (SPSGAGKT) lines the ATP pocket.

The protein belongs to the guanylate kinase family.

The protein resides in the cytoplasm. It catalyses the reaction GMP + ATP = GDP + ADP. In terms of biological role, essential for recycling GMP and indirectly, cGMP. This Wolbachia sp. subsp. Brugia malayi (strain TRS) protein is Guanylate kinase.